The following is a 266-amino-acid chain: 3',5'-cyclic-nucleotide phosphodiesterase alr5338 (266 aa).

7 residues coordinate Fe cation: aspartate 14, histidine 16, aspartate 56, asparagine 86, histidine 155, histidine 194, and histidine 196. AMP contacts are provided by residues histidine 16, aspartate 56, and 86 to 87 (NH). AMP is bound at residue histidine 196.

Belongs to the cyclic nucleotide phosphodiesterase class-III family. It depends on Fe(2+) as a cofactor. Mn(2+) serves as cofactor.

It catalyses the reaction a nucleoside 3',5'-cyclic phosphate + H2O = a nucleoside 5'-phosphate + H(+). It carries out the reaction 3',5'-cyclic AMP + H2O = AMP + H(+). The enzyme catalyses 3',5'-cyclic GMP + H2O = GMP + H(+). Activated by iron and manganese. Functionally, hydrolyzes cAMP to 5'-AMP. Plays an important regulatory role in modulating the intracellular concentration of cAMP, thereby influencing cAMP-dependent processes. Can also hydrolyze cGMP. The polypeptide is 3',5'-cyclic-nucleotide phosphodiesterase alr5338 (Nostoc sp. (strain PCC 7120 / SAG 25.82 / UTEX 2576)).